The following is a 471-amino-acid chain: Putative multidrug resistance protein MdtD (471 aa).

Over M1–Q11 the chain is Periplasmic. Residues L12–A32 traverse the membrane as a helical segment. The Cytoplasmic portion of the chain corresponds to L33–H48. The chain crosses the membrane as a helical span at residues M49–A69. The Periplasmic segment spans residues D70–N76. The chain crosses the membrane as a helical span at residues I77–T97. Over L98–L101 the chain is Cytoplasmic. Residues L102–M124 traverse the membrane as a helical segment. Residues K125–T137 lie on the Periplasmic side of the membrane. Residues F138–V158 form a helical membrane-spanning segment. Topologically, residues E159 to H164 are cytoplasmic. The chain crosses the membrane as a helical span at residues W165–M185. Residues P186–D196 lie on the Periplasmic side of the membrane. Residues L197–S217 form a helical membrane-spanning segment. At K218–P224 the chain is on the cytoplasmic side. A helical transmembrane segment spans residues L225–A245. Over R246–T262 the chain is Periplasmic. The chain crosses the membrane as a helical span at residues F263–M283. The Cytoplasmic portion of the chain corresponds to T284 to P285. The chain crosses the membrane as a helical span at residues V286–M306. Topologically, residues V307–T341 are periplasmic. The chain crosses the membrane as a helical span at residues L342–L362. Topologically, residues Q363 to S395 are cytoplasmic. Residues M396–F416 traverse the membrane as a helical segment. Residues G417–T430 lie on the Periplasmic side of the membrane. A helical membrane pass occupies residues V431 to A451. At R452–Q471 the chain is on the cytoplasmic side.

It belongs to the major facilitator superfamily. TCR/Tet family.

It localises to the cell inner membrane. This is Putative multidrug resistance protein MdtD from Shigella flexneri.